The following is a 255-amino-acid chain: uncharacterized protein (255 aa).

This is an uncharacterized protein from Pseudomonas chlororaphis (Pseudomonas aureofaciens).